A 20-amino-acid chain; its full sequence is Protein PR-L2 (20 aa).

The interval 1–20 is disordered; sequence SVFAFENEQSSTIAPARLYK.

It belongs to the BetVI family.

The polypeptide is Protein PR-L2 (Lupinus luteus (European yellow lupine)).